The primary structure comprises 479 residues: Auxin transporter-like protein 1 (479 aa).

Residues Met-1–Gln-58 are Cytoplasmic-facing. A helical transmembrane segment spans residues Val-59–Ile-76. Over Ser-77–Gly-78 the chain is Extracellular. Residues Ile-79 to Leu-99 traverse the membrane as a helical segment. Residues Tyr-100–Lys-134 are Cytoplasmic-facing. A helical transmembrane segment spans residues Ala-135–Ala-155. The Extracellular portion of the chain corresponds to Cys-156 to Thr-171. A helical transmembrane segment spans residues Trp-172–Tyr-192. Topologically, residues Arg-193 to Trp-195 are cytoplasmic. Residues Ser-196–Val-216 traverse the membrane as a helical segment. At His-217 to Met-231 the chain is on the extracellular side. A helical membrane pass occupies residues Val-232–Val-252. At Glu-253 to Lys-265 the chain is on the cytoplasmic side. A helical transmembrane segment spans residues Ala-266–Val-286. Topologically, residues Tyr-287–Gly-313 are extracellular. The chain crosses the membrane as a helical span at residues Val-314–Phe-334. The Cytoplasmic segment spans residues Val-335–Arg-355. Residues Leu-356–Asn-376 form a helical membrane-spanning segment. Ser-377 is a topological domain (extracellular). The helical transmembrane segment at Ala-378–Leu-398 threads the bilayer. Topologically, residues Thr-399–Thr-421 are cytoplasmic. The helical transmembrane segment at Leu-422–Gly-442 threads the bilayer. The Extracellular portion of the chain corresponds to Gly-443–His-479. N-linked (GlcNAc...) asparagine glycosylation occurs at Asn-474.

Belongs to the amino acid/polyamine transporter 2 family. Amino acid/auxin permease (AAAP) (TC 2.A.18.1) subfamily. In terms of tissue distribution, shoots and roots of nodulating plants. Higher levels in roots, flowers and stems, lower in nodules, leaves, petioles and shoot apices.

The protein resides in the cell membrane. Functionally, carrier protein involved in proton-driven auxin influx. Mediates the formation of auxin gradient from developing leaves (site of auxin biosynthesis) to tips by contributing to the loading of auxin in vascular tissues and facilitating acropetal (base to tip) auxin transport within inner tissues of the root apex, and basipetal (tip to base) auxin transport within outer tissues of the root apex. May be involved in lateral roots and nodules formation. The chain is Auxin transporter-like protein 1 (LAX1) from Medicago truncatula (Barrel medic).